Reading from the N-terminus, the 177-residue chain is uncharacterized protein (177 aa).

This sequence to M.jannaschii MJ0628.

This is an uncharacterized protein from Methanocaldococcus jannaschii (strain ATCC 43067 / DSM 2661 / JAL-1 / JCM 10045 / NBRC 100440) (Methanococcus jannaschii).